The primary structure comprises 701 residues: Polyribonucleotide nucleotidyltransferase (701 aa).

D487 and D493 together coordinate Mg(2+). A KH domain is found at 554–613; the sequence is PTMIAMKIDTDKIRDVIGKGGATIRAICEETKASIDIEDDGSIKIFGETKEAADAAKQRI. One can recognise an S1 motif domain in the interval 623-691; that stretch reads GKIYVGKVER…NRGRIKLSIK (69 aa).

This sequence belongs to the polyribonucleotide nucleotidyltransferase family. As to quaternary structure, component of the RNA degradosome, which is a multiprotein complex involved in RNA processing and mRNA degradation. Requires Mg(2+) as cofactor.

It localises to the cytoplasm. The catalysed reaction is RNA(n+1) + phosphate = RNA(n) + a ribonucleoside 5'-diphosphate. Involved in mRNA degradation. Catalyzes the phosphorolysis of single-stranded polyribonucleotides processively in the 3'- to 5'-direction. This chain is Polyribonucleotide nucleotidyltransferase, found in Pseudomonas putida (Arthrobacter siderocapsulatus).